The chain runs to 348 residues: NADH-ubiquinone oxidoreductase chain 2 (348 aa).

The next 9 helical transmembrane spans lie at V13–L33, F60–L80, P96–V116, P124–Y144, I150–G170, T200–L220, L241–F261, I278–I298, and L325–L345.

Belongs to the complex I subunit 2 family. In terms of assembly, core subunit of respiratory chain NADH dehydrogenase (Complex I) which is composed of 45 different subunits. Interacts with TMEM242.

It is found in the mitochondrion inner membrane. It catalyses the reaction a ubiquinone + NADH + 5 H(+)(in) = a ubiquinol + NAD(+) + 4 H(+)(out). Core subunit of the mitochondrial membrane respiratory chain NADH dehydrogenase (Complex I) which catalyzes electron transfer from NADH through the respiratory chain, using ubiquinone as an electron acceptor. Essential for the catalytic activity and assembly of complex I. The polypeptide is NADH-ubiquinone oxidoreductase chain 2 (Papio hamadryas (Hamadryas baboon)).